We begin with the raw amino-acid sequence, 387 residues long: Paralemmin-1 (387 aa).

Met1 is modified (N-acetylmethionine). Residues 9–101 adopt a coiled-coil conformation; sequence TSQQERLQAI…EKEIEVLERG (93 aa). 2 stretches are compositionally biased toward basic and acidic residues: residues 31-41 and 69-102; these read KRRQLEDERRQ and DLRR…ERGD. Residues 31–160 are disordered; the sequence is KRRQLEDERR…VSNTPLRTVD (130 aa). The segment covering 104-117 has biased composition (low complexity); it reads APATAKENAAAPSP. A phosphoserine mark is found at Ser116 and Ser124. Phosphothreonine is present on residues Thr141 and Thr145. A Phosphoserine modification is found at Ser162. The residue at position 243 (Thr243) is a Phosphothreonine. Residue Ser245 is modified to Phosphoserine. 2 disordered regions span residues 247–296 and 335–378; these read AGST…GQEP and AEPK…DMKK. Over residues 286–296 the composition is skewed to low complexity; that stretch reads GPPGIQPGQEP. Ser346 carries the post-translational modification Phosphoserine. At Thr367 the chain carries Phosphothreonine. Ser369 is subject to Phosphoserine. Residues Cys381 and Cys383 are each lipidated (S-palmitoyl cysteine). Cys384 carries the cysteine methyl ester modification. Cys384 carries S-farnesyl cysteine lipidation. Positions 385–387 are cleaved as a propeptide — removed in mature form; the sequence is SIM.

This sequence belongs to the paralemmin family. In terms of assembly, interacts with dopamine receptor DRD3. In terms of tissue distribution, widely expressed with highest expression in brain and testis and intermediate expression in heart and adrenal gland.

Its subcellular location is the cell membrane. The protein localises to the cell projection. The protein resides in the filopodium membrane. It localises to the axon. It is found in the dendrite. Its subcellular location is the dendritic spine. The protein localises to the basolateral cell membrane. The protein resides in the apicolateral cell membrane. Its function is as follows. Involved in plasma membrane dynamics and cell process formation. Isoform 1 and isoform 2 are necessary for axonal and dendritic filopodia induction, for dendritic spine maturation and synapse formation in a palmitoylation-dependent manner. This Homo sapiens (Human) protein is Paralemmin-1 (PALM).